The sequence spans 481 residues: Glutamyl-tRNA(Gln) amidotransferase subunit A (481 aa).

Catalysis depends on charge relay system residues Lys74 and Ser149. Ser173 serves as the catalytic Acyl-ester intermediate.

It belongs to the amidase family. GatA subfamily. As to quaternary structure, heterotrimer of A, B and C subunits.

The enzyme catalyses L-glutamyl-tRNA(Gln) + L-glutamine + ATP + H2O = L-glutaminyl-tRNA(Gln) + L-glutamate + ADP + phosphate + H(+). Its function is as follows. Allows the formation of correctly charged Gln-tRNA(Gln) through the transamidation of misacylated Glu-tRNA(Gln) in organisms which lack glutaminyl-tRNA synthetase. The reaction takes place in the presence of glutamine and ATP through an activated gamma-phospho-Glu-tRNA(Gln). The polypeptide is Glutamyl-tRNA(Gln) amidotransferase subunit A (Francisella tularensis subsp. tularensis (strain FSC 198)).